Here is an 85-residue protein sequence, read N- to C-terminus: U4-theraphotoxin-Hhn1m (85 aa).

The N-terminal stretch at 1–22 (MKVTLIAILTCAAVLVLHTTAA) is a signal peptide. The propeptide occupies 23-48 (EELEAESQLVEVGMPDTELAAVDEER). Cystine bridges form between Cys-52-Cys-66, Cys-56-Cys-77, and Cys-71-Cys-82.

The protein belongs to the neurotoxin 12 (Hwtx-2) family. 02 (Hwtx-2) subfamily. In terms of tissue distribution, expressed by the venom gland.

The protein localises to the secreted. Postsynaptic neurotoxin. This Cyriopagopus hainanus (Chinese bird spider) protein is U4-theraphotoxin-Hhn1m.